The sequence spans 716 residues: DNA ligase (716 aa).

Residues 47–51, 96–97, and Glu130 each bind NAD(+); these read DATYD and SL. Residue Lys132 is the N6-AMP-lysine intermediate of the active site. NAD(+) contacts are provided by Arg153, Glu190, Lys306, and Lys330. Zn(2+) is bound by residues Cys435, Cys438, Cys453, and Cys459. In terms of domain architecture, BRCT spans 638–716; sequence RSDSAVAGKT…EDEWLKLIEG (79 aa).

The protein belongs to the NAD-dependent DNA ligase family. LigA subfamily. It depends on Mg(2+) as a cofactor. Mn(2+) serves as cofactor.

It catalyses the reaction NAD(+) + (deoxyribonucleotide)n-3'-hydroxyl + 5'-phospho-(deoxyribonucleotide)m = (deoxyribonucleotide)n+m + AMP + beta-nicotinamide D-nucleotide.. Functionally, DNA ligase that catalyzes the formation of phosphodiester linkages between 5'-phosphoryl and 3'-hydroxyl groups in double-stranded DNA using NAD as a coenzyme and as the energy source for the reaction. It is essential for DNA replication and repair of damaged DNA. The polypeptide is DNA ligase (Nitrobacter winogradskyi (strain ATCC 25391 / DSM 10237 / CIP 104748 / NCIMB 11846 / Nb-255)).